The chain runs to 173 residues: Ribulose bisphosphate carboxylase small subunit, chloroplastic 1 (173 aa).

The N-terminal 49 residues, 1 to 49, are a transit peptide targeting the chloroplast; the sequence is MASIPATVATVAQANMVAPFTGLKANAAFPVTKKVNDFSTLPSNGGRVQ.

It belongs to the RuBisCO small chain family. As to quaternary structure, heterohexadecamer of 8 large and 8 small subunits.

It localises to the plastid. The protein resides in the chloroplast. Its function is as follows. RuBisCO catalyzes two reactions: the carboxylation of D-ribulose 1,5-bisphosphate, the primary event in carbon dioxide fixation, as well as the oxidative fragmentation of the pentose substrate. Both reactions occur simultaneously and in competition at the same active site. Although the small subunit is not catalytic it is essential for maximal activity. This Flaveria pringlei protein is Ribulose bisphosphate carboxylase small subunit, chloroplastic 1.